The chain runs to 146 residues: 3-dehydroquinate dehydratase (146 aa).

Residue Tyr-23 is the Proton acceptor of the active site. Asn-74, His-80, and Asp-87 together coordinate substrate. His-100 functions as the Proton donor in the catalytic mechanism. Residues 101-102 (IS) and Arg-111 each bind substrate.

This sequence belongs to the type-II 3-dehydroquinase family. In terms of assembly, homododecamer.

The enzyme catalyses 3-dehydroquinate = 3-dehydroshikimate + H2O. The protein operates within metabolic intermediate biosynthesis; chorismate biosynthesis; chorismate from D-erythrose 4-phosphate and phosphoenolpyruvate: step 3/7. In terms of biological role, catalyzes a trans-dehydration via an enolate intermediate. In Bacillus cereus (strain ATCC 14579 / DSM 31 / CCUG 7414 / JCM 2152 / NBRC 15305 / NCIMB 9373 / NCTC 2599 / NRRL B-3711), this protein is 3-dehydroquinate dehydratase.